A 360-amino-acid chain; its full sequence is MTVPPTATHQPWPGVIAAYRDRLPVGDDWTPVTLLEGGTPLIAATNLSKQTGCTIHLKVEGLNPTGSFKDRGMTMAVTDALAHGQRAVLCASTGNTSASAAAYAARAGITCAVLIPQGKIAMGKLAQAVMHGAKIIQIDGNFDDCLELARKMAADFPTISLVNSVNPVRIEGQKTAAFEIVDVLGTAPDVHALPVGNAGNITAYWKGYTEYHQLGLIDKLPRMLGTQAAGAAPLVLGEPVSHPETIATAIRIGSPASWTSAVEAQQQSKGRFLAASDEEILAAYHLVARVEGVFVEPASAASIAGLLKAIDDGWVARGSTVVCTVTGNGLKDPDTALKDMPSVSPVPVDPVAVVEKLGLA.

Position 69 is an N6-(pyridoxal phosphate)lysine (Lys-69). Pyridoxal 5'-phosphate contacts are provided by residues Asn-95, 196-200 (GNAGN), and Thr-326.

It belongs to the threonine synthase family. As to quaternary structure, homodimer. Pyridoxal 5'-phosphate is required as a cofactor.

It catalyses the reaction O-phospho-L-homoserine + H2O = L-threonine + phosphate. It functions in the pathway amino-acid biosynthesis; L-threonine biosynthesis; L-threonine from L-aspartate: step 5/5. Its function is as follows. Catalyzes the gamma-elimination of phosphate from L-phosphohomoserine and the beta-addition of water to produce L-threonine. This is Threonine synthase (thrC) from Mycobacterium bovis (strain ATCC BAA-935 / AF2122/97).